The chain runs to 233 residues: Cytidylate kinase (233 aa).

15-23 (GPSGAGKSS) is a binding site for ATP.

This sequence belongs to the cytidylate kinase family. Type 1 subfamily.

It is found in the cytoplasm. The catalysed reaction is CMP + ATP = CDP + ADP. The enzyme catalyses dCMP + ATP = dCDP + ADP. This is Cytidylate kinase from Citrifermentans bemidjiense (strain ATCC BAA-1014 / DSM 16622 / JCM 12645 / Bem) (Geobacter bemidjiensis).